The following is a 451-amino-acid chain: Cysteine protease ATG4 (451 aa).

Cys122 functions as the Nucleophile in the catalytic mechanism. Residues Asp297 and His299 contribute to the active site.

Belongs to the peptidase C54 family. Interacts with ATG8.

The protein resides in the cytoplasm. It localises to the nucleus. Its subcellular location is the preautophagosomal structure. The enzyme catalyses [protein]-C-terminal L-amino acid-glycyl-phosphatidylethanolamide + H2O = [protein]-C-terminal L-amino acid-glycine + a 1,2-diacyl-sn-glycero-3-phosphoethanolamine. Cysteine protease that plays a key role in cytoplasm to vacuole transport (Cvt) and autophagy by mediating both proteolytic activation and delipidation of ATG8. Required for selective autophagic degradation of the nucleus (nucleophagy) as well as for mitophagy which contributes to regulate mitochondrial quantity and quality by eliminating the mitochondria to a basal level to fulfill cellular energy requirements and preventing excess ROS production. The protease activity is required for proteolytic activation of ATG8: cleaves the C-terminal amino acid of ATG8 to reveal a C-terminal glycine. ATG8 ubiquitin-like activity requires the exposure of the glycine at the C-terminus for its conjugation to phosphatidylethanolamine (PE) and its insertion to membranes, which is necessary for autophagy. The ATG8-PE conjugate mediates tethering between adjacent membranes and stimulates membrane hemifusion, leading to expansion of the autophagosomal membrane during autophagy. In addition to the protease activity, also catalyzes deconjugation of PE-conjugated forms of ATG8 during macroautophagy: ATG8 delipidation is required to release the protein from membranes, which facilitates multiple events during macroautophagy, and especially for efficient autophagosome biogenesis, the assembly of ATG9-containing tubulovesicular clusters into phagophores/autophagosomes, and for the disassembly of PAS-associated ATG components. ATG8 delipidation by ATG4 also recycles ATG8-PE generated on inappropriate membranes to maintain a reservoir of unlipidated ATG8 that is required for autophagosome formation at the PAS. The sequence is that of Cysteine protease ATG4 from Kluyveromyces marxianus (strain DMKU3-1042 / BCC 29191 / NBRC 104275) (Yeast).